The following is a 496-amino-acid chain: Solute carrier family 2, facilitated glucose transporter member 3 (496 aa).

The Cytoplasmic segment spans residues 1–11; it reads MADKKKITASL. The chain crosses the membrane as a helical span at residues 12-33; it reads IYAVSVAAIGSLQFGYNTGVIN. At 34–65 the chain is on the extracellular side; it reads APEKIIQAFYNRTLSQRSGETISPELLTSLWS. N-linked (GlcNAc...) asparagine glycosylation occurs at Asn44. Residues 66–86 traverse the membrane as a helical segment; sequence LSVAIFSVGGMIGSFSVSLFF. Residues 87-91 lie on the Cytoplasmic side of the membrane; it reads NRFGR. Residues 92–112 traverse the membrane as a helical segment; the sequence is RNSMLLVNVLAFAGGALMALS. Over 113-119 the chain is Extracellular; the sequence is KIAKAVE. The chain crosses the membrane as a helical span at residues 120–143; sequence MLIIGRFIIGLFCGLCTGFVPMYI. The Cytoplasmic portion of the chain corresponds to 144 to 154; it reads SEVSPTSLRGA. The chain crosses the membrane as a helical span at residues 155-175; it reads FGTLNQLGIVVGILVAQIFGL. Gln160 lines the D-glucose pocket. Topologically, residues 176–184 are extracellular; it reads EGIMGTEAL. The chain crosses the membrane as a helical span at residues 185 to 205; that stretch reads WPLLLGFTIVPAVLQCVALLF. The Cytoplasmic portion of the chain corresponds to 206 to 270; it reads CPESPRFLLI…LFRSPNYRQP (65 aa). The helical transmembrane segment at 271-291 threads the bilayer; that stretch reads IIISITLQLSQQLSGINAVFY. Residues 278 to 280 form an important for selectivity against fructose region; that stretch reads QLS. D-glucose contacts are provided by residues 281 to 282 and Asn287; that span reads QQ. At 292 to 305 the chain is on the extracellular side; sequence YSTGIFERAGITQP. Residues 306–326 traverse the membrane as a helical segment; that stretch reads VYATIGAGVVNTVFTVVSLFL. Asn316 is a binding site for D-glucose. Topologically, residues 327-332 are cytoplasmic; it reads VERAGR. The chain crosses the membrane as a helical span at residues 333 to 353; the sequence is RTLHLVGLGGMAVCAAVMTIA. Topologically, residues 354-362 are extracellular; sequence LALKEKWIR. Residues 363 to 388 form a helical membrane-spanning segment; the sequence is YISIVATFGFVALFEIGPGPIPWFIV. D-glucose-binding residues include Glu377 and Trp385. At 389 to 398 the chain is on the cytoplasmic side; it reads AELFSQGPRP. The chain crosses the membrane as a helical span at residues 399-419; that stretch reads AAMAVAGCSNWTSNFLVGMLF. Residues 420 to 428 are Extracellular-facing; sequence PYAEKLCGP. Residues 429 to 449 form a helical membrane-spanning segment; it reads YVFLIFLVFLLIFFIFTYFKV. The Cytoplasmic segment spans residues 450 to 496; that stretch reads PETKGRTFEDISRGFEEQVETSSPSSPPIEKNPMVEMNSIEPDKEVA. The segment at 464 to 496 is disordered; that stretch reads FEEQVETSSPSSPPIEKNPMVEMNSIEPDKEVA.

The protein belongs to the major facilitator superfamily. Sugar transporter (TC 2.A.1.1) family. Glucose transporter subfamily.

The protein resides in the cell membrane. It is found in the perikaryon. It localises to the cell projection. It carries out the reaction D-glucose(out) = D-glucose(in). The catalysed reaction is D-galactose(in) = D-galactose(out). With respect to regulation, deoxyglucose transport is inhibited by D-glucose, D-galactose and maltose. Galactose transport is inhibited by D-glucose and maltose. In terms of biological role, facilitative glucose transporter. Can also mediate the uptake of various other monosaccharides across the cell membrane. Mediates the uptake of glucose, 2-deoxyglucose, galactose, mannose, xylose and fucose, and probably also dehydroascorbate. Does not mediate fructose transport. Required for mesendoderm differentiation. The sequence is that of Solute carrier family 2, facilitated glucose transporter member 3 from Gallus gallus (Chicken).